The chain runs to 498 residues: ATP synthase subunit beta, chloroplastic (498 aa).

172–179 (GGAGVGKT) serves as a coordination point for ATP.

The protein belongs to the ATPase alpha/beta chains family. F-type ATPases have 2 components, CF(1) - the catalytic core - and CF(0) - the membrane proton channel. CF(1) has five subunits: alpha(3), beta(3), gamma(1), delta(1), epsilon(1). CF(0) has four main subunits: a(1), b(1), b'(1) and c(9-12).

The protein resides in the plastid. The protein localises to the chloroplast thylakoid membrane. It carries out the reaction ATP + H2O + 4 H(+)(in) = ADP + phosphate + 5 H(+)(out). Functionally, produces ATP from ADP in the presence of a proton gradient across the membrane. The catalytic sites are hosted primarily by the beta subunits. The protein is ATP synthase subunit beta, chloroplastic of Phormium tenax (New Zealand flax).